The following is a 984-amino-acid chain: MSETKIKIKDLATELNIAPKEVLAAAKKLDIPAKNATSTLTTEEARKVRGQVQEASGDARRKDGASDVIIRRRRKGSGAKPAAREEAAPAETEAQASPAQPEAKAAAPAAEAEEAPAAKPAPAKARKAEARTEAPRARIIRPATPQAEEKAEPAPETAAPAQPAPEAQSAAPEKVEAHDAGAPVQQAETTESAPAEPAAEKAPAEKRRYEVSMEPEKDSVQADTEADGDADGGRKKKKKKKREETAGPQVRVISRPDPAAVQAQAAAAAQAREERAERPDRGPRPAGARPAGPRPGGPRQGDSRPGDGRPAPRSGAPRPGGARPAAGFGQPAQAENSSPFADGQSKKKRQKGRRTVEFGDKGAGGKKMREDVGGNWNRGKKGKRKPETKPVSTQPQRAAKRKIKVDEAIRVSDFAHQMGVKAPEIIKILMSLGIMATINQSLDIDTATVVAAEFGYEVEKVGFSEDEFLLPKEVDADELLLPRPPVVTIMGHVDHGKTSLLDAIRKSSVTTGEAGGITQHIGAYHVSTKRGDIVFLDTPGHEAFTAMRARGAQVTDLVILVVAADDGVMEQTREAISHAKAAGVPIVVAVNKIDKEGANRDRVMRELAEQDLVPEEWGGDTIFSYVSAKTREGLDDLLEMLALQAEVLELKANPDKPARGRIVEAKLDKGRGAVGTVLIQEGTLKHGDAFVCGVFSGRVRAMFNDQGKKAKQAGPSIPVEVQGFEGVPVAGEEFICVKDEKVARRIAEQRAIKQRERDLARESKVTLETFLARRKTDAETQTLNLVLKADVQGSVGAITDALRKMQTEKVKVDIIHSGAGAITESDILLASASDAIIIGFNVRPTAKVKDVAEQEKVEIRFYDIIYKLSEEIKSAMAGLLAPVVREQYLGQAEVRETFSVPKVGTVAGCHVADGKIIRNTKVRLLRDGVVIYTGRINSLKRFKDDVKEVAKGFECGMGLENYNDIKIGDIIEAFEEVEEAATLD.

The tract at residues 32–402 (PAKNATSTLT…TQPQRAAKRK (371 aa)) is disordered. Over residues 89–123 (PAETEAQASPAQPEAKAAAPAAEAEEAPAAKPAPA) the composition is skewed to low complexity. Over residues 126-136 (RKAEARTEAPR) the composition is skewed to basic and acidic residues. Low complexity-rich tracts occupy residues 154–172 (APET…SAAP) and 187–197 (AETTESAPAEP). Residues 198 to 220 (AAEKAPAEKRRYEVSMEPEKDSV) show a composition bias toward basic and acidic residues. Over residues 255-270 (RPDPAAVQAQAAAAAQ) the composition is skewed to low complexity. Over residues 271 to 283 (AREERAERPDRGP) the composition is skewed to basic and acidic residues. Residues 308–334 (GRPAPRSGAPRPGGARPAAGFGQPAQA) are compositionally biased toward low complexity. The region spanning 482 to 651 (PRPPVVTIMG…ALQAEVLELK (170 aa)) is the tr-type G domain. The tract at residues 491–498 (GHVDHGKT) is G1. 491–498 (GHVDHGKT) is a binding site for GTP. A G2 region spans residues 516-520 (GITQH). The G3 stretch occupies residues 537–540 (DTPG). Residues 537 to 541 (DTPGH) and 591 to 594 (NKID) contribute to the GTP site. Residues 591–594 (NKID) are G4. The segment at 627 to 629 (SAK) is G5.

The protein belongs to the TRAFAC class translation factor GTPase superfamily. Classic translation factor GTPase family. IF-2 subfamily.

It localises to the cytoplasm. Its function is as follows. One of the essential components for the initiation of protein synthesis. Protects formylmethionyl-tRNA from spontaneous hydrolysis and promotes its binding to the 30S ribosomal subunits. Also involved in the hydrolysis of GTP during the formation of the 70S ribosomal complex. The sequence is that of Translation initiation factor IF-2 from Oleidesulfovibrio alaskensis (strain ATCC BAA-1058 / DSM 17464 / G20) (Desulfovibrio alaskensis).